Here is a 793-residue protein sequence, read N- to C-terminus: Phenylalanine--tRNA ligase beta subunit (793 aa).

The tRNA-binding domain maps to 39 to 154 (TCSFSSIITA…ENTPLGESAC (116 aa)). The 79-residue stretch at 403-481 (PQASTLSFRT…QPWKVENKKA (79 aa)) folds into the B5 domain. Positions 457, 463, 466, and 467 each coordinate Mg(2+). The FDX-ACB domain occupies 697-793 (PIYPSSFRDI…QINDTKGTID (97 aa)).

Belongs to the phenylalanyl-tRNA synthetase beta subunit family. Type 1 subfamily. As to quaternary structure, tetramer of two alpha and two beta subunits. Mg(2+) is required as a cofactor.

The protein resides in the cytoplasm. The catalysed reaction is tRNA(Phe) + L-phenylalanine + ATP = L-phenylalanyl-tRNA(Phe) + AMP + diphosphate + H(+). In Chlamydia caviae (strain ATCC VR-813 / DSM 19441 / 03DC25 / GPIC) (Chlamydophila caviae), this protein is Phenylalanine--tRNA ligase beta subunit.